Consider the following 258-residue polypeptide: Type II restriction enzyme HincII (258 aa).

It catalyses the reaction Endonucleolytic cleavage of DNA to give specific double-stranded fragments with terminal 5'-phosphates.. A P subtype restriction enzyme that recognizes the double-stranded sequence 5'-GTYRAC-3' and cleaves after Y-3. The polypeptide is Type II restriction enzyme HincII (hincIIR) (Haemophilus influenzae).